We begin with the raw amino-acid sequence, 489 residues long: Ribulose bisphosphate carboxylase large chain 2 (489 aa).

Residues Asn-128 and Thr-178 each coordinate substrate. The Proton acceptor role is filled by Lys-180. Lys-182 contributes to the substrate binding site. Mg(2+)-binding residues include Lys-206, Asp-208, and Glu-209. Residue Lys-206 is modified to N6-carboxylysine. His-298 (proton acceptor) is an active-site residue. 3 residues coordinate substrate: Arg-299, His-331, and Ser-383.

It belongs to the RuBisCO large chain family. Type I subfamily. Heterohexadecamer of 8 large chains and 8 small chains. Mg(2+) is required as a cofactor.

It catalyses the reaction 2 (2R)-3-phosphoglycerate + 2 H(+) = D-ribulose 1,5-bisphosphate + CO2 + H2O. The catalysed reaction is D-ribulose 1,5-bisphosphate + O2 = 2-phosphoglycolate + (2R)-3-phosphoglycerate + 2 H(+). RuBisCO catalyzes two reactions: the carboxylation of D-ribulose 1,5-bisphosphate, the primary event in carbon dioxide fixation, as well as the oxidative fragmentation of the pentose substrate. Both reactions occur simultaneously and in competition at the same active site. The protein is Ribulose bisphosphate carboxylase large chain 2 of Nitrobacter winogradskyi (strain ATCC 25391 / DSM 10237 / CIP 104748 / NCIMB 11846 / Nb-255).